Consider the following 563-residue polypeptide: Kelch repeat and BTB domain-containing protein 1 (563 aa).

Residues 21–88 (CDINIVINDE…IYGIPLSLTN (68 aa)) enclose the BTB domain. In terms of domain architecture, BACK spans 123 to 219 (CIDFYIYADK…SLLSPQVIKS (97 aa)). Kelch repeat units follow at residues 252–297 (IELI…VMDN), 298–346 (IIYM…VDDE), 347–395 (YIYC…MLNG), 397–441 (IYVI…VHAG), 442–492 (KIYI…SVHN), and 494–540 (LYVG…PIKH).

In terms of assembly, interacts (via BTB domain) with host CUL3.

Its subcellular location is the host cytoplasm. Its function is as follows. Probable substrate-specific adapter of CUL3-containing E3 ubiquitin-protein ligases which mediate the ubiquitination and subsequent proteasomal degradation of host target proteins. This is Kelch repeat and BTB domain-containing protein 1 (KBTB1) from Mus musculus (Mouse).